A 142-amino-acid polypeptide reads, in one-letter code: Putative nickel-responsive regulator (142 aa).

Positions 77, 88, 90, and 96 each coordinate Ni(2+).

Belongs to the transcriptional regulatory CopG/NikR family. Homotetramer. Requires Ni(2+) as cofactor.

Transcriptional regulator. This chain is Putative nickel-responsive regulator, found in Halobacterium salinarum (strain ATCC 700922 / JCM 11081 / NRC-1) (Halobacterium halobium).